The chain runs to 76 residues: MLAKHKLARINELAKKAKTAGLSAEEAFEQAKLRREYIQAFRKAMTDMLHTVTVIDPSGNDVTPKKLKESQRRRFH.

The segment at 57–76 is disordered; the sequence is PSGNDVTPKKLKESQRRRFH. Positions 63 to 76 are enriched in basic and acidic residues; it reads TPKKLKESQRRRFH.

Belongs to the UPF0291 family.

The protein resides in the cytoplasm. This Geobacillus kaustophilus (strain HTA426) protein is UPF0291 protein GK1331.